A 166-amino-acid polypeptide reads, in one-letter code: Disulfide bond formation protein B (166 aa).

Over 1 to 12 (MKITKLPSYRQT) the chain is Cytoplasmic. The chain crosses the membrane as a helical span at residues 13-29 (ALIIFAGCVGLILAALY). The Periplasmic segment spans residues 30-47 (MQEVLGLHPCPLCITQRI). A disulfide bridge links Cys39 with Cys42. The chain crosses the membrane as a helical span at residues 48-64 (FIIGVGLISLIAAIHNP). Topologically, residues 65–70 (AALGRK) are cytoplasmic. The chain crosses the membrane as a helical span at residues 71 to 88 (VYGCLATLSGVIGAGVSA). The Periplasmic segment spans residues 89–145 (RHVWLQNLPEDQVPACGPDLAYMFDAFPLLDALKLLFAGDGNCADVVASFLGLSIPG). Cys104 and Cys131 are joined by a disulfide. The helical transmembrane segment at 146 to 164 (WTFVAFVGLIAISVWQGLR) threads the bilayer. Over 165–166 (KA) the chain is Cytoplasmic.

Belongs to the DsbB family.

It localises to the cell inner membrane. Its function is as follows. Required for disulfide bond formation in some periplasmic proteins. Acts by oxidizing the DsbA protein. The polypeptide is Disulfide bond formation protein B (Saccharophagus degradans (strain 2-40 / ATCC 43961 / DSM 17024)).